A 46-amino-acid polypeptide reads, in one-letter code: Endochitinase 3 (46 aa).

The segment at 1–21 (MTPQGNKPSSHDVITGRWTPS) is disordered.

This sequence belongs to the glycosyl hydrolase 19 family. Chitinase class I subfamily.

It catalyses the reaction Random endo-hydrolysis of N-acetyl-beta-D-glucosaminide (1-&gt;4)-beta-linkages in chitin and chitodextrins.. Defense against chitin-containing fungal and bacterial pathogens. This is Endochitinase 3 from Arachis hypogaea (Peanut).